We begin with the raw amino-acid sequence, 300 residues long: Porphobilinogen deaminase (300 aa).

C239 is subject to S-(dipyrrolylmethanemethyl)cysteine.

It belongs to the HMBS family. Monomer. Requires dipyrromethane as cofactor.

It carries out the reaction 4 porphobilinogen + H2O = hydroxymethylbilane + 4 NH4(+). The protein operates within porphyrin-containing compound metabolism; protoporphyrin-IX biosynthesis; coproporphyrinogen-III from 5-aminolevulinate: step 2/4. Functionally, tetrapolymerization of the monopyrrole PBG into the hydroxymethylbilane pre-uroporphyrinogen in several discrete steps. In Francisella tularensis subsp. tularensis (strain WY96-3418), this protein is Porphobilinogen deaminase.